The chain runs to 195 residues: FMN-dependent NADH:quinone oxidoreductase (195 aa).

FMN-binding positions include S9, 15 to 17, 85 to 88, and 129 to 132; these read SVS, MYNF, and SRGG.

Belongs to the azoreductase type 1 family. As to quaternary structure, homodimer. It depends on FMN as a cofactor.

It carries out the reaction 2 a quinone + NADH + H(+) = 2 a 1,4-benzosemiquinone + NAD(+). It catalyses the reaction N,N-dimethyl-1,4-phenylenediamine + anthranilate + 2 NAD(+) = 2-(4-dimethylaminophenyl)diazenylbenzoate + 2 NADH + 2 H(+). Functionally, quinone reductase that provides resistance to thiol-specific stress caused by electrophilic quinones. In terms of biological role, also exhibits azoreductase activity. Catalyzes the reductive cleavage of the azo bond in aromatic azo compounds to the corresponding amines. This chain is FMN-dependent NADH:quinone oxidoreductase, found in Stenotrophomonas maltophilia (strain K279a).